A 474-amino-acid chain; its full sequence is 3-isopropylmalate dehydratase large subunit (474 aa).

The [4Fe-4S] cluster site is built by cysteine 353, cysteine 414, and cysteine 417.

The protein belongs to the aconitase/IPM isomerase family. LeuC type 1 subfamily. Heterodimer of LeuC and LeuD. It depends on [4Fe-4S] cluster as a cofactor.

The enzyme catalyses (2R,3S)-3-isopropylmalate = (2S)-2-isopropylmalate. Its pathway is amino-acid biosynthesis; L-leucine biosynthesis; L-leucine from 3-methyl-2-oxobutanoate: step 2/4. In terms of biological role, catalyzes the isomerization between 2-isopropylmalate and 3-isopropylmalate, via the formation of 2-isopropylmaleate. The chain is 3-isopropylmalate dehydratase large subunit from Teredinibacter turnerae (strain ATCC 39867 / T7901).